The sequence spans 142 residues: MNLEAQISKIVEANGAALYDIETANEFDETIYRVLITKTGGVNLDLCATISNELSPFLDVHPPMNGHYRLEVSSPGIERKLSKPIHFQNAIGEKVKVKLLGGDKLKGVLKAADDKGITVETKQGEESYSYSDLGTVKTYFEW.

The protein belongs to the RimP family.

It is found in the cytoplasm. Functionally, required for maturation of 30S ribosomal subunits. This is Ribosome maturation factor RimP from Sulfurovum sp. (strain NBC37-1).